The chain runs to 521 residues: Caspase-10 (521 aa).

A propeptide spanning residues 1–219 is cleaved from the precursor; that stretch reads MKSQGQHWYS…GEEELVSQTD (219 aa). DED domains follow at residues 19–97 and 114–187; these read SFRE…HLNC and LFRN…NIEK. 2 stretches are compositionally biased toward polar residues: residues 231-248 and 259-268; these read SWQN…TNGA and ASANTLNSET. The interval 231-269 is disordered; the sequence is SWQNKHAGSNGNRATNGAPSLVSRGMQGASANTLNSETS. Active-site residues include His-358 and Cys-401.

This sequence belongs to the peptidase C14A family. Heterotetramer that consists of two anti-parallel arranged heterodimers, each one formed by a 23/17 kDa (p23/17) (depending on the splicing events) and a 12 kDa (p12) subunit. Self-associates. Interacts with FADD and CASP8. Found in a Fas signaling complex consisting of FAS, FADD, CASP8 and CASP10. Interacts with RFFL and RNF34; negatively regulate CASP10 through proteasomal degradation. Interacts with RIOK3. Cleavage by granzyme B and autocatalytic activity generate the two active subunits. As to expression, detectable in most tissues. Lowest expression is seen in brain, kidney, prostate, testis and colon.

The catalysed reaction is Strict requirement for Asp at position P1 and has a preferred cleavage sequence of Leu-Gln-Thr-Asp-|-Gly.. Functionally, involved in the activation cascade of caspases responsible for apoptosis execution. Recruited to both Fas- and TNFR-1 receptors in a FADD dependent manner. May participate in the granzyme B apoptotic pathways. Cleaves and activates effector caspases CASP3, CASP4, CASP6, CASP7, CASP8 and CASP9. Hydrolyzes the small- molecule substrates, Tyr-Val-Ala-Asp-|-AMC and Asp-Glu-Val-Asp-|-AMC. Isoform 7 can enhance NF-kappaB activity but promotes only slight apoptosis. Its function is as follows. Isoform C is proteolytically inactive. In Homo sapiens (Human), this protein is Caspase-10 (CASP10).